The chain runs to 403 residues: Tyrosine--tRNA ligase (403 aa).

Residues 45–54 carry the 'HIGH' region motif; sequence PTAPDLHLGH. The short motif at 229–233 is the 'KMSKS' region element; it reads KMSKS. Residue K232 coordinates ATP. The region spanning 341-402 is the S4 RNA-binding domain; that stretch reads VLLGRLLAEA…GKRRFARIVF (62 aa).

This sequence belongs to the class-I aminoacyl-tRNA synthetase family. TyrS type 2 subfamily. As to quaternary structure, homodimer.

It is found in the cytoplasm. The enzyme catalyses tRNA(Tyr) + L-tyrosine + ATP = L-tyrosyl-tRNA(Tyr) + AMP + diphosphate + H(+). Its function is as follows. Catalyzes the attachment of tyrosine to tRNA(Tyr) in a two-step reaction: tyrosine is first activated by ATP to form Tyr-AMP and then transferred to the acceptor end of tRNA(Tyr). The chain is Tyrosine--tRNA ligase from Geobacter metallireducens (strain ATCC 53774 / DSM 7210 / GS-15).